A 687-amino-acid polypeptide reads, in one-letter code: A-kinase anchor protein 8 (687 aa).

The segment at 1–195 (MEQSYGGYGA…FLRGRGQGRF (195 aa)) is interaction with MCM2. The tract at residues 1-210 (MEQSYGGYGA…SSTFIRSDPF (210 aa)) is interaction with DPY30. Residue Ser72 is modified to Phosphoserine. Residues 104-124 (SKEGGRGGISSGGEGMQDRDS) are disordered. The residue at position 109 (Arg109) is an Asymmetric dimethylarginine; alternate. Residue Arg109 is modified to Omega-N-methylarginine; alternate. Over residues 109–118 (RGGISSGGEG) the composition is skewed to gly residues. Positions 109–201 (RGGISSGGEG…QGRFQDRSNS (93 aa)) are interaction with DDX5. The nuclear matrix targeting site stretch occupies residues 127 to 152 (RFQPYESYDSRPCMPEHTPYRPSYSY). The segment at 189 to 221 (GRGQGRFQDRSNSSTFIRSDPFMPPSASSEPLS) is disordered. Position 199 is a phosphoserine (Ser199). Omega-N-methylarginine is present on residues Arg233 and Arg277. Residues 278-380 (SQTRIRDWPR…KQRRRDRMRD (103 aa)) are disordered. 2 stretches are compositionally biased toward basic and acidic residues: residues 281–295 (RIRD…ERFG) and 312–321 (PDAKLARADS). The Bipartite nuclear localization signal signature appears at 287–304 (RRRGFERFGPDNMGRKRK). Residue Lys315 forms a Glycyl lysine isopeptide (Lys-Gly) (interchain with G-Cter in SUMO2) linkage. Ser321, Ser326, and Ser337 each carry phosphoserine. The segment covering 322–332 (EGDLSENDDGA) has biased composition (acidic residues). Positions 336 to 358 (RSGDEEFRGEDDLCDSRKQRGEK) are enriched in basic and acidic residues. The tract at residues 385 to 448 (RIQFACSVCK…NKKIEKRRQE (64 aa)) is involved in chromatin-binding. 2 consecutive C2H2 AKAP95-type zinc fingers follow at residues 390–412 (CSVC…SKFH) and 479–502 (CLAC…SVDH). The involved in condensin complex recruitment stretch occupies residues 523–565 (SVLNNKHIVKMLEKYLKGEDPFVNETADLETEGDENLGEEKET). Residue Thr553 is modified to Phosphothreonine. Lys563 is covalently cross-linked (Glycyl lysine isopeptide (Lys-Gly) (interchain with G-Cter in SUMO2)). Positions 568 to 585 (EVAAEVLAEVITAAVKAV) are RII-binding. Positions 572–589 (EVLAEVITAAVKAVEGDG) are required for interaction with MYCBP. The interval 606-687 (VDTAEAGSDS…DAEAKDTPTE (82 aa)) is disordered. Residues 633-648 (RNMEDMARGEAAEARN) are compositionally biased toward basic and acidic residues. Over residues 649-666 (EAAVPAAAAGSPVPVIAI) the composition is skewed to low complexity. Residue Ser659 is modified to Phosphoserine.

This sequence belongs to the AKAP95 family. In terms of assembly, binds to dimeric RII-alpha regulatory subunit of PKA during mitosis. Interacts (via C-terminus) with FIGN. Interacts with NCAPD2, CCND1, CCND3, MCM2, RPS6KA1, PDE4A, CASP3. Interacts with DDX5, CCNE1. Interacts with NFKB1; detetcted in the cytoplasm. Interacts with MYCBP; MYCBP is translocated to the nucleus and the interaction prevents the association of the PKA catalytic subunit leading to suppression of PKA activity. Interacts with DPY30; mediating AKAP8 association with at least the MLL4/WBP7 HMT complex. Interacts with HDAC3; increased during mitosis. Interacts with GJA1; in the nucleus and in the nuclear membrane; the nuclear association increases with progress of cell cycle G1, S and G2 phase and decreases in M phase. Phosphorylated on tyrosine residues probably by SRC subfamily protein kinases; multiple phosphorylation is leading to dissociation from nuclear structures implicated in chromatin structural changes. As to expression, widely expressed. The protein has been detected in liver, fibroblasts, granulosa, myoblast, lymphoma and Sertoli cells.

It is found in the nucleus matrix. The protein localises to the nucleus. The protein resides in the nucleolus. Its subcellular location is the cytoplasm. Functionally, anchoring protein that mediates the subcellular compartmentation of cAMP-dependent protein kinase (PKA type II). Acts as an anchor for a PKA-signaling complex onto mitotic chromosomes, which is required for maintenance of chromosomes in a condensed form throughout mitosis. Recruits condensin complex subunit NCAPD2 to chromosomes required for chromatin condensation; the function appears to be independent from PKA-anchoring. May help to deliver cyclin D/E to CDK4 to facilitate cell cycle progression. Required for cell cycle G2/M transition and histone deacetylation during mitosis. In mitotic cells recruits HDAC3 to the vicinity of chromatin leading to deacetylation and subsequent phosphorylation at 'Ser-10' of histone H3; in this function may act redundantly with AKAP8L. Involved in nuclear retention of RPS6KA1 upon ERK activation thus inducing cell proliferation. May be involved in regulation of DNA replication by acting as scaffold for MCM2. Enhances HMT activity of the KMT2 family MLL4/WBP7 complex and is involved in transcriptional regulation. In a teratocarcinoma cell line is involved in retinoic acid-mediated induction of developmental genes implicating H3 'Lys-4' methylation. May be involved in recruitment of active CASP3 to the nucleus in apoptotic cells. May act as a carrier protein of GJA1 for its transport to the nucleus. May play a repressive role in the regulation of rDNA transcription. Preferentially binds GC-rich DNA in vitro. In cells, associates with ribosomal RNA (rRNA) chromatin, preferentially with rRNA promoter and transcribed regions. Involved in modulation of Toll-like receptor signaling. Required for the cAMP-dependent suppression of TNF-alpha in early stages of LPS-induced macrophage activation; the function probably implicates targeting of PKA to NFKB1. This Rattus norvegicus (Rat) protein is A-kinase anchor protein 8 (Akap8).